We begin with the raw amino-acid sequence, 424 residues long: Histidine--tRNA ligase (424 aa).

The segment at 1-22 (MSYRRPKGTYDVYPGDAARQEP) is disordered.

The protein belongs to the class-II aminoacyl-tRNA synthetase family. In terms of assembly, homodimer.

The protein localises to the cytoplasm. It catalyses the reaction tRNA(His) + L-histidine + ATP = L-histidyl-tRNA(His) + AMP + diphosphate + H(+). The polypeptide is Histidine--tRNA ligase (Rubrobacter xylanophilus (strain DSM 9941 / JCM 11954 / NBRC 16129 / PRD-1)).